An 870-amino-acid chain; its full sequence is MNHLNVLAKALYDNVAESPDELSFRKGDIMTVLEQDTQGLDGWWLCSLHGRQGIVPGNRLKILVGMYDKKPAGPGPGPPATPAQPQPGLHAPAPPASQYTPMLPNTYQPQPDSVYLVPTPSKAQQGLYQVPGPSPQFQSPPAKQTSTFSKQTPHHPFPSPATDLYQVPPGPGGPAQDIYQVPPSAGMGHDIYQVPPSMDTRSWEGTKPPAKVVVPTRVGQGYVYEAAQPEQDEYDIPRHLLAPGPQDIYDVPPVRGLLPSQYGQEVYDTPPMAVKGPNGRDPLLEVYDVPPSVEKGLPPSNHHAVYDVPPSVSKDVPDGPLLREETYDVPPAFAKAKPFDPARTPLVLAAPPPDSPPAEDVYDVPPPAPDLYDVPPGLRRPGPGTLYDVPRERVLPPEVADGGVVDSGVYAVPPPAEREAPAEGKRLSASSTGSTRSSQSASSLEVAGPGREPLELEVAVEALARLQQGVSATVAHLLDLAGSAGATGSWRSPSEPQEPLVQDLQAAVAAVQSAVHELLEFARSAVGNAAHTSDRALHAKLSRQLQKMEDVHQTLVAHGQALDAGRGGSGATLEDLDRLVACSRAVPEDAKQLASFLHGNASLLFRRTKATAPGPEGGGTLHPNPTDKTSSIQSRPLPSPPKFTSQDSPDGQYENSEGGWMEDYDYVHLQGKEEFEKTQKELLEKGSITRQGKSQLELQQLKQFERLEQEVSRPIDHDLANWTPAQPLAPGRTGGLGPSDRQLLLFYLEQCEANLTTLTNAVDAFFTAVATNQPPKIFVAHSKFVILSAHKLVFIGDTLSRQAKAADVRSQVTHYSNLLCDLLRGIVATTKAAALQYPSPSAAQDMVERVKELGHSTQQFRRVLGQLAAA.

Residue Met-1 is modified to N-acetylmethionine. Positions 3-65 (HLNVLAKALY…PGNRLKILVG (63 aa)) constitute an SH3 domain. Residues 70–156 (KPAGPGPGPP…TFSKQTPHHP (87 aa)) are disordered. The span at 73-85 (GPGPGPPATPAQP) shows a compositional bias: pro residues. Positions 97–111 (SQYTPMLPNTYQPQP) are enriched in polar residues. Residues 115–416 (YLVPTPSKAQ…SGVYAVPPPA (302 aa)) are substrate for kinases. A Phosphotyrosine; by SRC modification is found at Tyr-128. Residues Ser-134 and Ser-139 each carry the phosphoserine modification. The span at 135–151 (PQFQSPPAKQTSTFSKQ) shows a compositional bias: polar residues. Tyr-234 bears the Phosphotyrosine mark. At Tyr-249 the chain carries Phosphotyrosine; by ABL1. The residue at position 269 (Thr-269) is a Phosphothreonine. Ser-292 bears the Phosphoserine mark. Tyr-362, Tyr-372, and Tyr-410 each carry phosphotyrosine. 3 disordered regions span residues 411 to 449 (AVPPPAEREAPAEGKRLSASSTGSTRSSQSASSLEVAGP), 609 to 658 (KATA…NSEG), and 715 to 734 (IDHDLANWTPAQPLAPGRTG). Residues 416–426 (AEREAPAEGKR) are compositionally biased toward basic and acidic residues. Residues 427 to 444 (LSASSTGSTRSSQSASSL) show a composition bias toward low complexity. Phosphoserine occurs at positions 428, 437, and 639. A compositionally biased stretch (polar residues) spans 626 to 655 (TDKTSSIQSRPLPSPPKFTSQDSPDGQYEN). An SH3-binding motif is present at residues 635–643 (RPLPSPPKF). Residues 746-796 (FYLEQCEANLTTLTNAVDAFFTAVATNQPPKIFVAHSKFVILSAHKLVFIG) are divergent helix-loop-helix motif.

The protein belongs to the CAS family. Forms complexes in vivo with PTK2/FAK1, adapter protein CRKL and LYN kinase. Heterodimerizes with NEDD9. Component of a complex comprised of SH2D3C, BCAR1/CAS, and CRK. Within the complex, interacts with SH2D3C (via C-terminus), and CRK. Part of a complex comprised of PTPRA, BCAR1, BCAR3 (via SH2 domain) and SRC; the formation of the complex is dependent on integrin mediated-tyrosine phosphorylation of PTPRA. Interacts with BCAR3 (via Ras-GEF domain); the interaction regulates adhesion-dependent serine phosphorylation. Interacts with SMAD2 and SMAD3. Interacts with NPHP1. Interacts with PTK2B/PYK2. Interacts (via C-terminus) with SH2D3C/CHAT isoform 2 (via C-terminus). Interacts with activated CSPG4. Interacts with BMX, INPPL1/SHIP2 and PEAK1. Part of a collagen-stimulated complex involved in cell migration made of CDC42, CRK, TNK2 and BCAR1/p130cas. Interacts with TNK2 via SH3 domains. Interacts (when tyrosine-phosphorylated) with tensin TNS1; the interaction is increased by phosphorylation of TNS1. In terms of processing, PTK2/FAK1 activation mediates phosphorylation at the YDYVHL motif; phosphorylation is most likely catalyzed by SRC family members. SRC-family kinases are recruited to the phosphorylated sites and can phosphorylate other tyrosine residues. Tyrosine phosphorylation is triggered by integrin-mediated adhesion of cells to the extracellular matrix. Post-translationally, dephosphorylated by PTPN14 at Tyr-128. Phosphorylated by SRC kinase in a EDN1- and PTK2B-mediated manner; phosphorylation strengthens its interaction with BCAR3 as part of the PTK2B/BCAR1/BCAR3/RAP1 signaling pathway. Expressed in B-cells (at protein level). Widely expressed with an abundant expression in the testis. Low level of expression seen in the liver, thymus, and peripheral blood leukocytes.

Its subcellular location is the cell junction. The protein localises to the focal adhesion. It is found in the cytoplasm. The protein resides in the cell projection. It localises to the axon. Functionally, docking protein which plays a central coordinating role for tyrosine kinase-based signaling related to cell adhesion. Implicated in induction of cell migration and cell branching. Involved in the BCAR3-mediated inhibition of TGFB signaling. The polypeptide is Breast cancer anti-estrogen resistance protein 1 (BCAR1) (Homo sapiens (Human)).